The sequence spans 117 residues: Large ribosomal subunit protein uL18 (117 aa).

It belongs to the universal ribosomal protein uL18 family. Part of the 50S ribosomal subunit; part of the 5S rRNA/L5/L18/L25 subcomplex. Contacts the 5S and 23S rRNAs.

In terms of biological role, this is one of the proteins that bind and probably mediate the attachment of the 5S RNA into the large ribosomal subunit, where it forms part of the central protuberance. The chain is Large ribosomal subunit protein uL18 from Idiomarina loihiensis (strain ATCC BAA-735 / DSM 15497 / L2-TR).